The sequence spans 250 residues: Probable transcriptional regulatory protein Lferr_0060 (250 aa).

It belongs to the TACO1 family.

It is found in the cytoplasm. This is Probable transcriptional regulatory protein Lferr_0060 from Acidithiobacillus ferrooxidans (strain ATCC 53993 / BNL-5-31) (Leptospirillum ferrooxidans (ATCC 53993)).